The sequence spans 257 residues: DNA repair protein RecO (257 aa).

This sequence belongs to the RecO family.

Functionally, involved in DNA repair and RecF pathway recombination. The sequence is that of DNA repair protein RecO from Streptococcus thermophilus (strain CNRZ 1066).